Reading from the N-terminus, the 403-residue chain is MAVKIEQALGEKRSLNDNDEVPRKKRYNFRKKVELDYSALNEGEDKKSKFFHPHIALFEKEFEKCLSNVTEDMSMTCSEYCKRFDDIDFPLKISDPENSGMVVSTNNKTTRDLTVDDITQAVGDDYFVNVMDVQSQENERWSLREWCNYFNKPAEEKDRIRNVISLEVSHVEDLQYDRPDIVDDKDLVDIVWNNVENLDTENDPRPKVTKYCLMSVKNAFTDYHLDFAGTSVYYNLAFGKKKFILYPPTPENIENYIEWSTSTYQNMLFLGEKLTGGVAMELNGGDLFMIPSGYIHVVYTPEDSLIFGGNYLTFRDISQQLKIVDVEKQTGVTKRYTFPMFDEVMGRTCEWLCQNQKKGKQMQVKKETVNDLISYMKSGKTKYKPTNFINKKQMLQELSNLYL.

Residues 141–328 (WSLREWCNYF…QQLKIVDVEK (188 aa)) form the JmjC domain. Thr-221 lines the substrate pocket. 2 residues coordinate Fe cation: His-224 and Asp-226. Lys-241 contacts substrate. Fe cation is bound at residue His-296.

Belongs to the JHDM1 histone demethylase family. Fe(2+) is required as a cofactor.

The protein resides in the nucleus. The enzyme catalyses N(6),N(6)-dimethyl-L-lysyl(36)-[histone H3] + 2 2-oxoglutarate + 2 O2 = L-lysyl(36)-[histone H3] + 2 formaldehyde + 2 succinate + 2 CO2. Histone demethylase that specifically demethylates 'Lys-36' of histone H3, thereby playing a central role in histone code. In Candida glabrata (strain ATCC 2001 / BCRC 20586 / JCM 3761 / NBRC 0622 / NRRL Y-65 / CBS 138) (Yeast), this protein is JmjC domain-containing histone demethylation protein 1 (JHD1).